We begin with the raw amino-acid sequence, 634 residues long: tRNA uridine 5-carboxymethylaminomethyl modification enzyme MnmG (634 aa).

An FAD-binding site is contributed by 14–19; it reads GGGHAG. 279–293 contributes to the NAD(+) binding site; that stretch reads GPRYCPSIEDKVVRF.

It belongs to the MnmG family. As to quaternary structure, homodimer. Heterotetramer of two MnmE and two MnmG subunits. FAD is required as a cofactor.

The protein localises to the cytoplasm. Its function is as follows. NAD-binding protein involved in the addition of a carboxymethylaminomethyl (cmnm) group at the wobble position (U34) of certain tRNAs, forming tRNA-cmnm(5)s(2)U34. The polypeptide is tRNA uridine 5-carboxymethylaminomethyl modification enzyme MnmG (Xanthomonas campestris pv. campestris (strain 8004)).